The sequence spans 126 residues: Glycine cleavage system H protein (126 aa).

The Lipoyl-binding domain maps to D19–E100. Position 60 is an N6-lipoyllysine (K60).

It belongs to the GcvH family. In terms of assembly, the glycine cleavage system is composed of four proteins: P, T, L and H. The cofactor is (R)-lipoate.

In terms of biological role, the glycine cleavage system catalyzes the degradation of glycine. The H protein shuttles the methylamine group of glycine from the P protein to the T protein. This Koribacter versatilis (strain Ellin345) protein is Glycine cleavage system H protein.